The sequence spans 346 residues: High mobility group protein 20A (346 aa).

2 stretches are compositionally biased toward polar residues: residues 1 to 10 and 55 to 65; these read MESLMASSTL and SQGQLLQSEAS. Disordered regions lie at residues 1-112 and 178-210; these read MESL…YVRF and FSRK…TEVK. The segment covering 71–81 has biased composition (basic and acidic residues); the sequence is NEQRPEDEQRS. Basic residues predominate over residues 82 to 95; it reads KRGGWSKGRKRKKP. Residues 102–170 constitute a DNA-binding region (HMG box); sequence PKSPLTGYVR…RYMKELEQYQ (69 aa). S104 is subject to Phosphoserine. The segment covering 181–210 has biased composition (basic and acidic residues); it reads KTQDRQKGKSHRQDAARQATHDHEKETEVK. A coiled-coil region spans residues 228–272; it reads SKAREAELRQLRKSNMEFEERNAALQKHVESMRTAVEKLEVDVIQ.

Interacts with DTNB. In terms of tissue distribution, expressed in brain. Detected in mature neurons.

Its subcellular location is the nucleus. In terms of biological role, plays a role in neuronal differentiation as chromatin-associated protein. Acts as inhibitor of HMG20B. Overcomes the repressive effects of the neuronal silencer REST and induces the activation of neuronal-specific genes. Involved in the recruitment of the histone methyltransferase KMT2A/MLL1 and consequent increased methylation of histone H3 lysine 4. The protein is High mobility group protein 20A (Hmg20a) of Mus musculus (Mouse).